We begin with the raw amino-acid sequence, 263 residues long: Tryptophan synthase alpha chain (263 aa).

Residues Glu41 and Asp52 each act as proton acceptor in the active site.

This sequence belongs to the TrpA family. In terms of assembly, tetramer of two alpha and two beta chains.

It catalyses the reaction (1S,2R)-1-C-(indol-3-yl)glycerol 3-phosphate + L-serine = D-glyceraldehyde 3-phosphate + L-tryptophan + H2O. Its pathway is amino-acid biosynthesis; L-tryptophan biosynthesis; L-tryptophan from chorismate: step 5/5. Functionally, the alpha subunit is responsible for the aldol cleavage of indoleglycerol phosphate to indole and glyceraldehyde 3-phosphate. The protein is Tryptophan synthase alpha chain of Geobacillus sp. (strain WCH70).